We begin with the raw amino-acid sequence, 361 residues long: MEEYYMKLALDLAKQGEGQTESNPLVGAVVVKDGQIVGMGAHLKYGEAHAEVHAIHMAGAHAEGADIYVTLEPCSHYGKTPPCAELIINSGIKRVFVAMRDPNPLVAGRGISMMKEAGIEVREGILADQAERLNEKFLHFMRTGLPYVTLKAAASLDGKIATSTGDSKWITSEAARQDAQQYRKTHQSILVGVGTVKADNPSLTCRLPNVTKQPVRVILDTVLSIPEDAKVICDQIAPTWIFTTARADEEKKKRLSAFGVNIFTLETERIQIPDVLKILAEEGIMSVYVEGGSAVHGSFVKEGCFQEIIFYFAPKLIGGTHAPSLISGEGFQSMKDVPLLQFTDITQIGRDIKLTAKPTKE.

One can recognise a CMP/dCMP-type deaminase domain in the interval 1 to 122 (MEEYYMKLAL…MMKEAGIEVR (122 aa)). A deaminase region spans residues 1 to 144 (MEEYYMKLAL…EKFLHFMRTG (144 aa)). Residue H49 coordinates Zn(2+). Catalysis depends on E51, which acts as the Proton donor. Zn(2+)-binding residues include C74 and C83. Positions 145–361 (LPYVTLKAAA…IKLTAKPTKE (217 aa)) are reductase. A153 contacts NADP(+). Substrate is bound at residue S167. Residue W169 participates in NADP(+) binding. Position 183 (R183) interacts with substrate. NADP(+)-binding residues include T195 and D199. Residues L203 and R206 each coordinate substrate. T221 lines the NADP(+) pocket. E290 provides a ligand contact to substrate. 292 to 298 (GSAVHGS) contributes to the NADP(+) binding site.

The protein in the N-terminal section; belongs to the cytidine and deoxycytidylate deaminase family. This sequence in the C-terminal section; belongs to the HTP reductase family. As to quaternary structure, homotetramer. The cofactor is Zn(2+).

The catalysed reaction is 2,5-diamino-6-hydroxy-4-(5-phosphoribosylamino)-pyrimidine + H2O + H(+) = 5-amino-6-(5-phospho-D-ribosylamino)uracil + NH4(+). It carries out the reaction 5-amino-6-(5-phospho-D-ribitylamino)uracil + NADP(+) = 5-amino-6-(5-phospho-D-ribosylamino)uracil + NADPH + H(+). The protein operates within cofactor biosynthesis; riboflavin biosynthesis; 5-amino-6-(D-ribitylamino)uracil from GTP: step 2/4. It functions in the pathway cofactor biosynthesis; riboflavin biosynthesis; 5-amino-6-(D-ribitylamino)uracil from GTP: step 3/4. Converts 2,5-diamino-6-(ribosylamino)-4(3h)-pyrimidinone 5'-phosphate into 5-amino-6-(ribosylamino)-2,4(1h,3h)-pyrimidinedione 5'-phosphate. This is Riboflavin biosynthesis protein RibD (ribD) from Bacillus subtilis (strain 168).